The primary structure comprises 257 residues: UPF0246 protein RSc2009 (257 aa).

The protein belongs to the UPF0246 family.

This Ralstonia nicotianae (strain ATCC BAA-1114 / GMI1000) (Ralstonia solanacearum) protein is UPF0246 protein RSc2009.